Here is a 292-residue protein sequence, read N- to C-terminus: tRNA-splicing endonuclease (292 aa).

Active-site residues include Y231, H238, and K267.

This sequence belongs to the tRNA-intron endonuclease family. Archaeal long subfamily. In terms of assembly, homodimer.

It carries out the reaction pretRNA = a 3'-half-tRNA molecule with a 5'-OH end + a 5'-half-tRNA molecule with a 2',3'-cyclic phosphate end + an intron with a 2',3'-cyclic phosphate and a 5'-hydroxyl terminus.. In terms of biological role, endonuclease that removes tRNA introns. Cleaves pre-tRNA at the 5'- and 3'-splice sites to release the intron. The products are an intron and two tRNA half-molecules bearing 2',3' cyclic phosphate and 5'-OH termini. Recognizes a pseudosymmetric substrate in which 2 bulged loops of 3 bases are separated by a stem of 4 bp. The sequence is that of tRNA-splicing endonuclease from Thermoplasma volcanium (strain ATCC 51530 / DSM 4299 / JCM 9571 / NBRC 15438 / GSS1).